The chain runs to 194 residues: Probable GTP-binding protein EngB (194 aa).

In terms of domain architecture, EngB-type G spans 22 to 194; it reads DLPEYALAGR…AWQFIKEGME (173 aa). Residues 30–37, 57–61, 75–78, 142–145, and 174–176 contribute to the GTP site; these read GRSNVGKS, GKTQT, DVPG, TKAD, and FSS. Residues Ser-37 and Thr-59 each contribute to the Mg(2+) site.

Belongs to the TRAFAC class TrmE-Era-EngA-EngB-Septin-like GTPase superfamily. EngB GTPase family. It depends on Mg(2+) as a cofactor.

In terms of biological role, necessary for normal cell division and for the maintenance of normal septation. This chain is Probable GTP-binding protein EngB, found in Listeria welshimeri serovar 6b (strain ATCC 35897 / DSM 20650 / CCUG 15529 / CIP 8149 / NCTC 11857 / SLCC 5334 / V8).